We begin with the raw amino-acid sequence, 260 residues long: Glutamate racemase (260 aa).

Substrate is bound by residues 14–15 (DS) and 46–47 (YG). C77 functions as the Proton donor/acceptor in the catalytic mechanism. 78-79 (NT) contributes to the substrate binding site. C188 (proton donor/acceptor) is an active-site residue. Position 189 to 190 (189 to 190 (TH)) interacts with substrate.

This sequence belongs to the aspartate/glutamate racemases family.

It catalyses the reaction L-glutamate = D-glutamate. It participates in cell wall biogenesis; peptidoglycan biosynthesis. Functionally, provides the (R)-glutamate required for cell wall biosynthesis. The chain is Glutamate racemase from Clostridium perfringens (strain 13 / Type A).